We begin with the raw amino-acid sequence, 89 residues long: NADH-ubiquinone oxidoreductase chain 4L (89 aa).

A run of 3 helical transmembrane segments spans residues 1–21, 22–42, and 57–77; these read MNITLILFLIGILGFVLNRKN, IILMLISIEIMLLAITFLILV, and IYIIVVAGAESAIGLAILVAF.

The protein belongs to the complex I subunit 4L family.

It is found in the mitochondrion membrane. It carries out the reaction a ubiquinone + NADH + 5 H(+)(in) = a ubiquinol + NAD(+) + 4 H(+)(out). Core subunit of the mitochondrial membrane respiratory chain NADH dehydrogenase (Complex I) that is believed to belong to the minimal assembly required for catalysis. Complex I functions in the transfer of electrons from NADH to the respiratory chain. The immediate electron acceptor for the enzyme is believed to be ubiquinone. In Neurospora crassa (strain ATCC 24698 / 74-OR23-1A / CBS 708.71 / DSM 1257 / FGSC 987), this protein is NADH-ubiquinone oxidoreductase chain 4L (ndh-4L).